The chain runs to 247 residues: MCSRGVGRTTEQGIRIGRAGERERIRGRVRAVIGQLEGILRDLKEVAKELKEVVEQIDRLTSDFEFELDTDDWTPGTVSSTSSSEKGGPLCDLGPLDFLSSDSWEFCSFLEASTPSDSGDGSDRPPDFRLLNGGVTPNGPDSSSEEIPIAQQKPPPSKNSGSRDRVRFSDKVLYHALCCDDSEDPPYGQETPRDPPRATAPCAVMKSKPGGLTGVRKGTRNCSTQTVCDKSTQTVLPYVPKKGKDKL.

The stretch at 30 to 65 forms a coiled coil; that stretch reads RAVIGQLEGILRDLKEVAKELKEVVEQIDRLTSDFE. Disordered regions lie at residues 69 to 90, 112 to 166, and 180 to 217; these read DTDD…GGPL, ASTP…RDRV, and DDSE…GVRK. Over residues 76–85 the composition is skewed to polar residues; the sequence is GTVSSTSSSE.

Belongs to the INSYN1 family.

It localises to the postsynaptic density. Functionally, may be a component of the protein machinery at the inhibitory synapses, probably acting as a scaffold. The chain is Inhibitory synaptic factor 1 from Xenopus laevis (African clawed frog).